Here is a 550-residue protein sequence, read N- to C-terminus: Copine-F (550 aa).

2 consecutive C2 domains span residues 1 to 115 (MAET…RLIG) and 123 to 246 (ITGK…PIIN). The 226-residue stretch at 296 to 521 (DLMVAIDCTE…DFQNEILRKL (226 aa)) folds into the VWFA domain.

It belongs to the copine family.

The chain is Copine-F (cpnF) from Dictyostelium discoideum (Social amoeba).